Consider the following 238-residue polypeptide: Uridylate kinase (238 aa).

Position 13–16 (13–16) interacts with ATP; the sequence is KLSG. Residue glycine 53 coordinates UMP. Positions 54 and 58 each coordinate ATP. Residues aspartate 73 and 134–141 each bind UMP; that span reads AGLPYFST. Asparagine 162, tyrosine 168, and aspartate 171 together coordinate ATP.

Belongs to the UMP kinase family. As to quaternary structure, homohexamer.

It localises to the cytoplasm. It catalyses the reaction UMP + ATP = UDP + ADP. Its pathway is pyrimidine metabolism; CTP biosynthesis via de novo pathway; UDP from UMP (UMPK route): step 1/1. With respect to regulation, inhibited by UTP. Functionally, catalyzes the reversible phosphorylation of UMP to UDP. The chain is Uridylate kinase from Clavibacter michiganensis subsp. michiganensis (strain NCPPB 382).